The following is a 99-amino-acid chain: Phosphoribosyl-ATP pyrophosphatase (99 aa).

Belongs to the PRA-PH family.

The protein localises to the cytoplasm. It catalyses the reaction 1-(5-phospho-beta-D-ribosyl)-ATP + H2O = 1-(5-phospho-beta-D-ribosyl)-5'-AMP + diphosphate + H(+). It participates in amino-acid biosynthesis; L-histidine biosynthesis; L-histidine from 5-phospho-alpha-D-ribose 1-diphosphate: step 2/9. In Methanococcoides burtonii (strain DSM 6242 / NBRC 107633 / OCM 468 / ACE-M), this protein is Phosphoribosyl-ATP pyrophosphatase.